Consider the following 1239-residue polypeptide: Zinc finger and BTB domain-containing protein 40 (1239 aa).

Residues 24 to 87 form the BTB domain; sequence CDCTISIGTI…MYTGKLPVGK (64 aa). Disordered stretches follow at residues 130-231, 687-732, and 779-801; these read SAPS…TSTE, HLEA…PDPA, and KELD…PKKK. Positions 136–145 are enriched in basic and acidic residues; the sequence is TFRKEPEKPQ. The span at 181 to 199 shows a compositional bias: polar residues; that stretch reads SVSQEMSVNSPTAQESQRN. Position 190 is a phosphoserine (serine 190). Low complexity predominate over residues 200-212; it reads AETPAETPTTAEA. Basic and acidic residues predominate over residues 687–703; it reads HLEANNKEDEKAAKEDS. The residue at position 703 (serine 703) is a Phosphoserine. Residues 705–719 show a composition bias toward polar residues; that stretch reads PGEQNDQGETGSLPG. 10 C2H2-type zinc fingers span residues 807–830, 836–858, 864–887, 893–915, 921–944, 950–973, 978–1000, 1006–1029, 1046–1069, and 1075–1098; these read VTCD…LTEH, FSCE…LRLH, FMCK…KKKH, YACQ…VRTH, YVCR…HTFH, YDCK…HEVH, HPCP…VVTH, FSCG…RTHH, LQCS…KAEH, and HECD…KCQH. Residue lysine 1066 forms a Glycyl lysine isopeptide (Lys-Gly) (interchain with G-Cter in SUMO2) linkage. A C2H2-type 11; atypical zinc finger spans residues 1104–1127; it reads FRCLYCAATFRFPGALQHHVTTEH. The segment at 1135–1158 adopts a C2H2-type 12 zinc-finger fold; it reads FPCELCGELFTSQAQLDSHLESEH.

Belongs to the krueppel C2H2-type zinc-finger protein family.

It is found in the nucleus. Its function is as follows. May be involved in transcriptional regulation. In Homo sapiens (Human), this protein is Zinc finger and BTB domain-containing protein 40 (ZBTB40).